Consider the following 1437-residue polypeptide: CRISPR-associated endoribonuclease Cas13a (1437 aa).

HEPN-like fold stretches follow at residues 460–626 and 1101–1437; these read LNAS…AMFE and EFRD…QLKN. The interval 1377–1419 is disordered; the sequence is EVKEKKKPSDNNTGKGYSKRDRQQDRKEYDKYKEKKKKEGNFL. Positions 1394-1416 are enriched in basic and acidic residues; that stretch reads SKRDRQQDRKEYDKYKEKKKKEG.

The protein belongs to the CRISPR-associated endoribonuclease Cas13a family. It depends on a divalent metal cation as a cofactor.

Its activity is regulated as follows. Target RNA acts as an activator for non-specific ssRNA degradation. In terms of biological role, CRISPR (clustered regularly interspaced short palindromic repeat), is an adaptive immune system that provides protection against mobile genetic elements (viruses, transposable elements and conjugative plasmids). CRISPR clusters contain sequences complementary to antecedent mobile elements and target invading nucleic acids. Unlike many single-component effectors, this CRISPR-Cas system targets RNA. CRISPR clusters are transcribed from pre-CRISPR RNA (crRNA) and processed into crRNA by this protein. Cleaves linear target ssRNA in a pre-crRNA-dependent fashion, preferentially around A residues. Binding a viable target RNA target activates this protein for non-specific RNA degradation in vitro (called collateral RNA degradation), but it is not very sensitive as it requires nanomolar levels of viable target RNA. This chain is CRISPR-associated endoribonuclease Cas13a, found in Lachnospiraceae bacterium (strain NK4A179).